Consider the following 380-residue polypeptide: Cobalt-precorrin-5B C(1)-methyltransferase (380 aa).

It belongs to the CbiD family.

It catalyses the reaction Co-precorrin-5B + S-adenosyl-L-methionine = Co-precorrin-6A + S-adenosyl-L-homocysteine. It participates in cofactor biosynthesis; adenosylcobalamin biosynthesis; cob(II)yrinate a,c-diamide from sirohydrochlorin (anaerobic route): step 6/10. Its function is as follows. Catalyzes the methylation of C-1 in cobalt-precorrin-5B to form cobalt-precorrin-6A. The polypeptide is Cobalt-precorrin-5B C(1)-methyltransferase (Salinispora tropica (strain ATCC BAA-916 / DSM 44818 / JCM 13857 / NBRC 105044 / CNB-440)).